Consider the following 1057-residue polypeptide: Carbamoyl phosphate synthase large chain (1057 aa).

The segment at 1–401 is carboxyphosphate synthetic domain; the sequence is MPKRNDIKTI…SLLKAIRSLE (401 aa). Residues Arg129, Arg169, Gly175, Gly176, Lys208, Ile210, Glu215, Gly241, Ile242, His243, Gln284, and Glu298 each coordinate ATP. The region spanning 133 to 327 is the ATP-grasp 1 domain; the sequence is RNLMNELNEP…IAKLAAKIAV (195 aa). Gln284, Glu298, and Asn300 together coordinate Mg(2+). Mn(2+)-binding residues include Gln284, Glu298, and Asn300. The oligomerization domain stretch occupies residues 402 to 546; the sequence is YGVHHLGLPN…YGTYETENES (145 aa). The segment at 547 to 929 is carbamoyl phosphate synthetic domain; it reads IRSDKKKVVV…ALYKGLVASG (383 aa). One can recognise an ATP-grasp 2 domain in the interval 671–861; sequence EALMQRIEIP…MANLAMKAIL (191 aa). Residues Arg707, Arg746, Leu748, Glu752, Gly777, Val778, His779, Ser780, Gln820, and Glu832 each coordinate ATP. Positions 820, 832, and 834 each coordinate Mg(2+). Mn(2+) contacts are provided by Gln820, Glu832, and Asn834. One can recognise an MGS-like domain in the interval 930–1057; that stretch reads LQVKDHGTVL…ESMTFNMNQM (128 aa). An allosteric domain region spans residues 930–1057; it reads LQVKDHGTVL…ESMTFNMNQM (128 aa).

It belongs to the CarB family. As to quaternary structure, composed of two chains; the small (or glutamine) chain promotes the hydrolysis of glutamine to ammonia, which is used by the large (or ammonia) chain to synthesize carbamoyl phosphate. Tetramer of heterodimers (alpha,beta)4. The cofactor is Mg(2+). Mn(2+) serves as cofactor.

The catalysed reaction is hydrogencarbonate + L-glutamine + 2 ATP + H2O = carbamoyl phosphate + L-glutamate + 2 ADP + phosphate + 2 H(+). It carries out the reaction hydrogencarbonate + NH4(+) + 2 ATP = carbamoyl phosphate + 2 ADP + phosphate + 2 H(+). The protein operates within amino-acid biosynthesis; L-arginine biosynthesis; carbamoyl phosphate from bicarbonate: step 1/1. It functions in the pathway pyrimidine metabolism; UMP biosynthesis via de novo pathway; (S)-dihydroorotate from bicarbonate: step 1/3. Functionally, large subunit of the glutamine-dependent carbamoyl phosphate synthetase (CPSase). CPSase catalyzes the formation of carbamoyl phosphate from the ammonia moiety of glutamine, carbonate, and phosphate donated by ATP, constituting the first step of 2 biosynthetic pathways, one leading to arginine and/or urea and the other to pyrimidine nucleotides. The large subunit (synthetase) binds the substrates ammonia (free or transferred from glutamine from the small subunit), hydrogencarbonate and ATP and carries out an ATP-coupled ligase reaction, activating hydrogencarbonate by forming carboxy phosphate which reacts with ammonia to form carbamoyl phosphate. This chain is Carbamoyl phosphate synthase large chain, found in Macrococcus caseolyticus (strain JCSC5402) (Macrococcoides caseolyticum).